Consider the following 324-residue polypeptide: Phospho-N-acetylmuramoyl-pentapeptide-transferase (324 aa).

The next 9 membrane-spanning stretches (helical) occupy residues 13 to 33, 59 to 79, 85 to 105, 121 to 141, 143 to 163, 179 to 199, 201 to 221, 243 to 263, and 303 to 323; these read VLSALLMGFAFSMVLGPIFIP, PTMGGLIFFISVTVTMLIIGY, GMVVLYSLIAFGIIGFLDDIL, MILLLLFSIALAYYGYTNIGT, IIIPFMNSKLNLGIFYIPLVV, IDGLASSVTVIVLTFFAIVGF, TGHYQVGVFSIALAGALLGFL, AIATIALILKMPLFIIIVGGI, and VKLVTVFSIITLILCIIGFIA.

It belongs to the glycosyltransferase 4 family. MraY subfamily. Requires Mg(2+) as cofactor.

The protein localises to the cell membrane. The enzyme catalyses UDP-N-acetyl-alpha-D-muramoyl-L-alanyl-gamma-D-glutamyl-meso-2,6-diaminopimeloyl-D-alanyl-D-alanine + di-trans,octa-cis-undecaprenyl phosphate = di-trans,octa-cis-undecaprenyl diphospho-N-acetyl-alpha-D-muramoyl-L-alanyl-D-glutamyl-meso-2,6-diaminopimeloyl-D-alanyl-D-alanine + UMP. Its pathway is cell wall biogenesis; peptidoglycan biosynthesis. Functionally, catalyzes the initial step of the lipid cycle reactions in the biosynthesis of the cell wall peptidoglycan: transfers peptidoglycan precursor phospho-MurNAc-pentapeptide from UDP-MurNAc-pentapeptide onto the lipid carrier undecaprenyl phosphate, yielding undecaprenyl-pyrophosphoryl-MurNAc-pentapeptide, known as lipid I. The chain is Phospho-N-acetylmuramoyl-pentapeptide-transferase from Clostridium botulinum (strain Alaska E43 / Type E3).